Reading from the N-terminus, the 260-residue chain is Ubiquinone/menaquinone biosynthesis C-methyltransferase UbiE (260 aa).

Residues Thr83, Asp104, 132–133 (NA), and Ser149 contribute to the S-adenosyl-L-methionine site.

It belongs to the class I-like SAM-binding methyltransferase superfamily. MenG/UbiE family.

The catalysed reaction is a 2-demethylmenaquinol + S-adenosyl-L-methionine = a menaquinol + S-adenosyl-L-homocysteine + H(+). It carries out the reaction a 2-methoxy-6-(all-trans-polyprenyl)benzene-1,4-diol + S-adenosyl-L-methionine = a 5-methoxy-2-methyl-3-(all-trans-polyprenyl)benzene-1,4-diol + S-adenosyl-L-homocysteine + H(+). Its pathway is quinol/quinone metabolism; menaquinone biosynthesis; menaquinol from 1,4-dihydroxy-2-naphthoate: step 2/2. It functions in the pathway cofactor biosynthesis; ubiquinone biosynthesis. In terms of biological role, methyltransferase required for the conversion of demethylmenaquinol (DMKH2) to menaquinol (MKH2) and the conversion of 2-polyprenyl-6-methoxy-1,4-benzoquinol (DDMQH2) to 2-polyprenyl-3-methyl-6-methoxy-1,4-benzoquinol (DMQH2). This Vibrio vulnificus (strain CMCP6) protein is Ubiquinone/menaquinone biosynthesis C-methyltransferase UbiE.